The following is a 266-amino-acid chain: Phosphatidylserine decarboxylase proenzyme (266 aa).

Catalysis depends on charge relay system; for autoendoproteolytic cleavage activity residues aspartate 74, histidine 135, and serine 237. Catalysis depends on serine 237, which acts as the Schiff-base intermediate with substrate; via pyruvic acid; for decarboxylase activity. A Pyruvic acid (Ser); by autocatalysis modification is found at serine 237.

Belongs to the phosphatidylserine decarboxylase family. PSD-B subfamily. Prokaryotic type I sub-subfamily. Heterodimer of a large membrane-associated beta subunit and a small pyruvoyl-containing alpha subunit. Pyruvate is required as a cofactor. Is synthesized initially as an inactive proenzyme. Formation of the active enzyme involves a self-maturation process in which the active site pyruvoyl group is generated from an internal serine residue via an autocatalytic post-translational modification. Two non-identical subunits are generated from the proenzyme in this reaction, and the pyruvate is formed at the N-terminus of the alpha chain, which is derived from the carboxyl end of the proenzyme. The autoendoproteolytic cleavage occurs by a canonical serine protease mechanism, in which the side chain hydroxyl group of the serine supplies its oxygen atom to form the C-terminus of the beta chain, while the remainder of the serine residue undergoes an oxidative deamination to produce ammonia and the pyruvoyl prosthetic group on the alpha chain. During this reaction, the Ser that is part of the protease active site of the proenzyme becomes the pyruvoyl prosthetic group, which constitutes an essential element of the active site of the mature decarboxylase.

It localises to the cell membrane. The catalysed reaction is a 1,2-diacyl-sn-glycero-3-phospho-L-serine + H(+) = a 1,2-diacyl-sn-glycero-3-phosphoethanolamine + CO2. The protein operates within phospholipid metabolism; phosphatidylethanolamine biosynthesis; phosphatidylethanolamine from CDP-diacylglycerol: step 2/2. Functionally, catalyzes the formation of phosphatidylethanolamine (PtdEtn) from phosphatidylserine (PtdSer). The protein is Phosphatidylserine decarboxylase proenzyme of Campylobacter jejuni subsp. jejuni serotype O:2 (strain ATCC 700819 / NCTC 11168).